A 154-amino-acid polypeptide reads, in one-letter code: Putative protein heh-1 (154 aa).

The N-terminal stretch at 1–15 (MKTVIFLALLGLAAA) is a signal peptide. 2 cysteine pairs are disulfide-bonded: Cys-39-Cys-50 and Cys-97-Cys-103.

The protein belongs to the NPC2 family.

The protein resides in the secreted. This is Putative protein heh-1 (heh-1) from Caenorhabditis elegans.